A 389-amino-acid chain; its full sequence is Transcription factor MYB97 (389 aa).

HTH myb-type domains follow at residues 16–68 and 69–123; these read GVVL…ANHL and RPNL…KRFQ. DNA-binding regions (H-T-H motif) lie at residues 44-68 and 96-119; these read WNSVQKKTWLARCGKSCRLRWANHL and WARMAAQLPGRTDNEIKNYWNTRL. Positions 131-159 are disordered; that stretch reads PPEYSQNNHQQQMYPQQPSSPLPSQTPAS. Over residues 140–159 the composition is skewed to low complexity; the sequence is QQQMYPQQPSSPLPSQTPAS.

Accumulates in pollen grains and pollen tube. Mostly expressed in mature pollen grains, and, to a lower extent, in inflorescences and siliques.

The protein resides in the nucleus. Functionally, transcription activator. Binds to 5'-CAACTGTC-3' and/or 5'-TAACAAA-3' motif in target gene promoter to promote their expression. Together with MYB101 and MYB120, functions as a male factor that controls pollen tube-synergid interaction in fertilization. Required for pollen tube growth arrest and sperm cell release in the female gametophyte, probably via the regulation of pollen tube-specific gene expression. This chain is Transcription factor MYB97, found in Arabidopsis thaliana (Mouse-ear cress).